Here is a 297-residue protein sequence, read N- to C-terminus: Probable endonuclease 4 (297 aa).

Zn(2+) is bound by residues histidine 69, histidine 110, glutamate 145, aspartate 179, histidine 182, histidine 214, aspartate 227, histidine 229, and glutamate 259.

This sequence belongs to the AP endonuclease 2 family. Zn(2+) is required as a cofactor.

It carries out the reaction Endonucleolytic cleavage to 5'-phosphooligonucleotide end-products.. Endonuclease IV plays a role in DNA repair. It cleaves phosphodiester bonds at apurinic or apyrimidinic (AP) sites, generating a 3'-hydroxyl group and a 5'-terminal sugar phosphate. This is Probable endonuclease 4 from Listeria monocytogenes serotype 4b (strain F2365).